We begin with the raw amino-acid sequence, 369 residues long: MQHAAVCSGTSRHRRTTVTIEKPPATSAPIVEMKDVRRMFGETAAINGVSLSVARGEILGIIGRSGAGKSTLIRCVNGLEKPDTGSIHIEGREITSLDEDALRPVRRRIGMVFQHFNLLSAKTAAQNIALPLKIAGMPKAERIKRVAELLELVGLSDKASHYPAQLSGGQKQRVGIARALAAEPAVLLSDEATSALDPETTQSILALLKDINAKLGLTILLITHEMDVIRRIADRVIVLDHGLIAEEGPVWKVFANPQSPVTQSMLQVLTPELPAIWRNRLEKKGDQAILRVKLSGMAAKGAFFNDVAAATSLAPQLIHGGMDTIQGEPVGTLFIGLPAEDKTKLKAAIGYLNTHADATEVLGYVSGNA.

The ABC transporter domain maps to Val31–Leu266. Gly63–Ser70 lines the ATP pocket.

It belongs to the ABC transporter superfamily. Methionine importer (TC 3.A.1.24) family. The complex is composed of two ATP-binding proteins (MetN), two transmembrane proteins (MetI) and a solute-binding protein (MetQ).

Its subcellular location is the cell inner membrane. The enzyme catalyses L-methionine(out) + ATP + H2O = L-methionine(in) + ADP + phosphate + H(+). The catalysed reaction is D-methionine(out) + ATP + H2O = D-methionine(in) + ADP + phosphate + H(+). Part of the ABC transporter complex MetNIQ involved in methionine import. Responsible for energy coupling to the transport system. This is Methionine import ATP-binding protein MetN from Brucella abortus (strain 2308).